The sequence spans 168 residues: Glycine-rich RNA-binding protein 2 (168 aa).

In terms of domain architecture, RRM spans 8-86; that stretch reads YRCFVGGLAW…RNITVNQAQS (79 aa). The interval 148–168 is disordered; the sequence is GYGGGGGYGGNRGDSGGNWRN.

In terms of biological role, possibly has a role in RNA transcription or processing during stress. This chain is Glycine-rich RNA-binding protein 2 (GRP2), found in Sorghum bicolor (Sorghum).